A 175-amino-acid chain; its full sequence is Alpha-crystallin B chain (175 aa).

The residue at position 1 (Met-1) is an N-acetylmethionine. The residue at position 19 (Ser-19) is a Phosphoserine. Residue Ser-41 is glycosylated (O-linked (GlcNAc) serine). 2 positions are modified to phosphoserine: Ser-45 and Ser-59. The sHSP domain occupies 56–164 (RAPSWIDTGL…PERTIPITRE (109 aa)). His-83 contacts Zn(2+). Lys-90 carries an N-linked (Glc) (glycation) lysine glycan. Lys-92 carries the N6-acetyllysine; alternate modification. An N-linked (Glc) (glycation) lysine; alternate glycan is attached at Lys-92. Positions 104, 106, 111, and 119 each coordinate Zn(2+). Residues 144 to 175 (TVNGPRKQASGPERTIPITREEKPAVTAAPKK) are disordered. Lys-166 is subject to N6-acetyllysine. A glycan (O-linked (GlcNAc) threonine) is linked at Thr-170.

It belongs to the small heat shock protein (HSP20) family. In terms of assembly, heteromer composed of three CRYAA and one CRYAB subunits. Aggregates with homologous proteins, including the small heat shock protein HSPB1, to form large heteromeric complexes. Inter-subunit bridging via zinc ions enhances stability, which is crucial as there is no protein turn over in the lens. Interacts with HSPBAP1 and TTN/titin. Interacts with TMEM109; in the cellular response to DNA damage. Interacts with DES; binds rapidly during early stages of DES filament assembly and a reduced binding seen in the later stages. Interacts with TMED10; the interaction mediates the translocation from the cytoplasm into the ERGIC (endoplasmic reticulum-Golgi intermediate compartment) and thereby secretion. Interacts with ATP6V1A and with MTOR, forming a ternary complex. In terms of processing, it is not known whether either Lys-90, or Lys-92, or both are glycated. As to expression, lens as well as other tissues.

Its subcellular location is the cytoplasm. The protein localises to the nucleus. It is found in the secreted. The protein resides in the lysosome. May contribute to the transparency and refractive index of the lens. Has chaperone-like activity, preventing aggregation of various proteins under a wide range of stress conditions. In lens epithelial cells, stabilizes the ATP6V1A protein, preventing its degradation by the proteasome. The polypeptide is Alpha-crystallin B chain (CRYAB) (Bos taurus (Bovine)).